Reading from the N-terminus, the 956-residue chain is Translation initiation factor IF-2 (956 aa).

The segment at Ser-33–Leu-370 is disordered. A compositionally biased stretch (polar residues) spans Ile-46–Ala-60. The segment covering Ala-63 to Ala-73 has biased composition (basic and acidic residues). The span at Ala-76–Ser-100 shows a compositional bias: low complexity. Composition is skewed to basic and acidic residues over residues Phe-112 to Ala-125, Ser-134 to Gln-143, and Asn-179 to Arg-192. The segment covering Arg-199–Ala-213 has biased composition (low complexity). Basic and acidic residues-rich tracts occupy residues Ala-234–Ala-258 and Gln-266–Ser-276. Residues Ala-277–Lys-293 show a composition bias toward low complexity. Over residues Asn-303 to Lys-320 the composition is skewed to basic and acidic residues. Residues Ser-325–Asn-343 are compositionally biased toward low complexity. Residues Lys-344–Asn-354 show a composition bias toward basic residues. Residues Glu-457–Lys-626 enclose the tr-type G domain. Residues Gly-466–Thr-473 are G1. Gly-466 to Thr-473 lines the GTP pocket. Positions Gly-491–His-495 are G2. Residues Asp-512 to Gly-515 form a G3 region. GTP contacts are provided by residues Asp-512–His-516 and Asn-566–Asp-569. Residues Asn-566 to Asp-569 are G4. Residues Ser-602 to Lys-604 form a G5 region.

The protein belongs to the TRAFAC class translation factor GTPase superfamily. Classic translation factor GTPase family. IF-2 subfamily.

Its subcellular location is the cytoplasm. In terms of biological role, one of the essential components for the initiation of protein synthesis. Protects formylmethionyl-tRNA from spontaneous hydrolysis and promotes its binding to the 30S ribosomal subunits. Also involved in the hydrolysis of GTP during the formation of the 70S ribosomal complex. This chain is Translation initiation factor IF-2, found in Streptococcus equi subsp. equi (strain 4047).